The following is a 263-amino-acid chain: Undecaprenyl-diphosphatase 2 (263 aa).

8 helical membrane-spanning segments follow: residues 15–37 (GLTE…LIGF), 42–62 (AKVF…VIFW), 79–99 (SLNL…GVLF), 107–127 (LFGP…MIVA), 142–162 (ITYK…WPGF), 183–203 (AEYT…LDLI), 216–236 (LFVT…VSFL), and 242–262 (VKLT…YFFI).

Belongs to the UppP family.

The protein resides in the cell membrane. It carries out the reaction di-trans,octa-cis-undecaprenyl diphosphate + H2O = di-trans,octa-cis-undecaprenyl phosphate + phosphate + H(+). Catalyzes the dephosphorylation of undecaprenyl diphosphate (UPP). Confers resistance to bacitracin. The chain is Undecaprenyl-diphosphatase 2 from Bacillus cereus (strain ATCC 14579 / DSM 31 / CCUG 7414 / JCM 2152 / NBRC 15305 / NCIMB 9373 / NCTC 2599 / NRRL B-3711).